The chain runs to 481 residues: Glutamyl-tRNA(Gln) amidotransferase subunit A (481 aa).

Residues Lys-74 and Ser-149 each act as charge relay system in the active site. The active-site Acyl-ester intermediate is Ser-173.

It belongs to the amidase family. GatA subfamily. In terms of assembly, heterotrimer of A, B and C subunits.

It carries out the reaction L-glutamyl-tRNA(Gln) + L-glutamine + ATP + H2O = L-glutaminyl-tRNA(Gln) + L-glutamate + ADP + phosphate + H(+). In terms of biological role, allows the formation of correctly charged Gln-tRNA(Gln) through the transamidation of misacylated Glu-tRNA(Gln) in organisms which lack glutaminyl-tRNA synthetase. The reaction takes place in the presence of glutamine and ATP through an activated gamma-phospho-Glu-tRNA(Gln). The polypeptide is Glutamyl-tRNA(Gln) amidotransferase subunit A (Francisella tularensis subsp. tularensis (strain FSC 198)).